The primary structure comprises 1418 residues: Protein ced-11 (1418 aa).

The next 7 membrane-spanning stretches (helical) occupy residues F617–V637, Y755–L775, L782–L802, V818–P838, V856–L876, F898–F918, and I986–F1006.

Its subcellular location is the membrane. Functionally, plays a major role in programmed cell death. In Caenorhabditis elegans, this protein is Protein ced-11 (ced-11).